The primary structure comprises 401 residues: MPPPLLLLLLLAAAAAAVAPARSKSTLESCSSSTACPALLSYTLYADLKLAELAALFSADPLAILAANSIDFAVPDPADRILPAGLPLRVPVPCACSDGIRRVTTVRYVARPGDTLASVASSVYGGLTTPDWISDSNGILGAKPDAAVDAGTTLFVPLHCACFGGVDNGLPAVYLTYVAGKGDTVAAVAQRYRTTATDLMSVNDMATPELAAGDIIVVPLPACTSSFPAFTADYGLAVANGTYAVTANRCVQCSCGPGNLDLFCVPAPLADSTCSSMQCANSSMMLGNFTLLMTSSGCSVTSCSYGGFVNGTILTTLTTALKPQCPGPHQYPPLIPPPTSSFFETYLGPSPTPMASEGGVMAGMAPTSTPAASSGPPPAGRHVVGDVLGAFALCLVGNLLW.

The N-terminal stretch at 1-23 (MPPPLLLLLLLAAAAAAVAPARS) is a signal peptide. 4 disulfide bridges follow: Cys30/Cys96, Cys36/Cys162, Cys94/Cys160, and Cys96/Cys162. 2 LysM domains span residues 106–156 (VRYV…TLFV) and 175–218 (LTYV…IIVV). Intrachain disulfides connect Cys223-Cys255 and Cys250-Cys279. N-linked (GlcNAc...) asparagine glycosylation occurs at Asn240. Residues Asn281, Asn288, and Asn310 are each glycosylated (N-linked (GlcNAc...) asparagine). Ser373 is lipidated: GPI-anchor amidated serine. A propeptide spans 374–401 (SGPPPAGRHVVGDVLGAFALCLVGNLLW) (removed in mature form).

In terms of assembly, interacts with LYP6. Interacts with CEBIP. Interacts with CERK1. As to expression, expressed in roots and leaves.

Its subcellular location is the cell membrane. Functions in innate immunity. Functions as a pattern recognition receptor (PRR), sensing bacterial peptidoglycan (PGN) and fungal chitin at the cell surface. Involved in resistance against the bacterial pathogen Xanthomonas oryzae pv. oryzae (Xoo) and the fungal pathogen Magnaporthe oryzae. Binds PGN and fungal chitin in vitro. Involved in microbe-associated molecular patterns (MAMPs) perception and participates in the activation of defense genes against the bacterial pathogen Xanthomonas oryzae pv. oryzicola (Xoc) or the fungal pathogen Magnaporthe oryzae. The polypeptide is LysM domain-containing GPI-anchored protein LYP4 (Oryza sativa subsp. japonica (Rice)).